Here is a 361-residue protein sequence, read N- to C-terminus: D-alanine--D-alanine ligase (361 aa).

Positions 134-344 (KLLLKSFNIP…FKDLVDNLIN (211 aa)) constitute an ATP-grasp domain. Residue 167–222 (REALGYPVIVKPAVLGSSIGINVAYSENQIEFFIEEALKYDLTILIEKFIEAREIE) coordinates ATP. Mg(2+) contacts are provided by Asp-297, Glu-311, and Asn-313.

The protein belongs to the D-alanine--D-alanine ligase family. Mg(2+) serves as cofactor. It depends on Mn(2+) as a cofactor.

It localises to the cytoplasm. It carries out the reaction 2 D-alanine + ATP = D-alanyl-D-alanine + ADP + phosphate + H(+). It participates in cell wall biogenesis; peptidoglycan biosynthesis. Its function is as follows. Cell wall formation. In Borrelia garinii subsp. bavariensis (strain ATCC BAA-2496 / DSM 23469 / PBi) (Borreliella bavariensis), this protein is D-alanine--D-alanine ligase.